A 971-amino-acid polypeptide reads, in one-letter code: MELSDANLQTLTEYLKKTLDPDPAIRRPAEKFLESVEGNQNYPLLLLTLLEKSQDNVIKVCASVTFKNYIKRNWRIVEDEPNKICEADRVAIKANIVHLMLSSPEQIQKQLSDAISIIGREDFPQKWPDLLTEMVNRFQSGDFHVINGVLRTAHSLFKRYRHEFKSNELWTEIKLVLDAFALPLTNLFKATIELCSTHANDASALRILFSSLILISKLFYSLNFQDLPEFFEDNMETWMNNFHTLLTLDNKLLQTDDEEEAGLLELLKSQICDNAALYAQKYDEEFQRYLPRFVTAIWNLLVTTGQEVKYDLLVSNAIQFLASVCERPHYKNLFEDQNTLTSICEKVIVPNMEFRAADEEAFEDNSEEYIRRDLEGSDIDTRRRAACDLVRGLCKFFEGPVTGIFSGYVNSMLQEYAKNPSVNWKHKDAAIYLVTSLASKAQTQKHGITQANELVNLTEFFVNHILPDLKSANVNEFPVLKADGIKYITIFRNQVPKEHLLVSIPLLINHLQAESIVVHTYAAHALERLFTMRGPNSATLFTAAEIAPFVEILLTNLFKALTLPGSSENEYIMKAIMRSFSLLQEAIIPYIPTLITQLTQKLLAVSKNPSKPHFNHYMFEAICLSIRITCKSNPAAVVNFEEALFLVFTEILQNDVQEFIPYVFQVMSLLLETHKNDIPSSYMALFPHLLQPVLWERTGNIPALVRLLQAFLERGSNTIASAAADKIPGLLGVFQKLIASKANDHQGFYLLNSIIEHMPPESVDQYRKQIFILLFQRLQNSKTTKFIKSFLVFINLYCIKYGALALQEIFDGIQPKMFGMVLEKIIIPEIQKVSGNVEKKICAVGITKLLTECPPMMDTEYTKLWTPLLQSLIGLFELPEDDTIPDEEHFIDIEDTPGYQTAFSQLAFAGKKEHDPVGQMVNNPKIHLAQSLHKLSTACPGRVPSMVSTSLNAEALQYLQGYLQAASVTLL.

The residue at position 1 (methionine 1) is an N-acetylmethionine. The 74-residue stretch at 29-102 (AEKFLESVEG…KANIVHLMLS (74 aa)) folds into the Importin N-terminal domain. Serine 112 is modified (phosphoserine). An N6-acetyllysine mark is found at lysine 574 and lysine 824. At serine 931 the chain carries Phosphoserine.

It belongs to the XPO2/CSE1 family. In terms of assembly, found in a complex with CSE1L/XPO2, Ran and KPNA2. Binds with high affinity to importin-alpha only in the presence of RanGTP. The complex is dissociated by the combined action of RanBP1 and RanGAP1. Interacts with CFTR.

The protein localises to the cytoplasm. Its subcellular location is the nucleus. In terms of biological role, export receptor for importin-alpha. Mediates importin-alpha re-export from the nucleus to the cytoplasm after import substrates (cargos) have been released into the nucleoplasm. In the nucleus binds cooperatively to importin-alpha and to the GTPase Ran in its active GTP-bound form. Docking of this trimeric complex to the nuclear pore complex (NPC) is mediated through binding to nucleoporins. Upon transit of a nuclear export complex into the cytoplasm, disassembling of the complex and hydrolysis of Ran-GTP to Ran-GDP (induced by RANBP1 and RANGAP1, respectively) cause release of the importin-alpha from the export receptor. CSE1L/XPO2 then return to the nuclear compartment and mediate another round of transport. The directionality of nuclear export is thought to be conferred by an asymmetric distribution of the GTP- and GDP-bound forms of Ran between the cytoplasm and nucleus. In Bos taurus (Bovine), this protein is Exportin-2 (CSE1L).